The sequence spans 320 residues: ATPase H(+)-transporting accessory protein 2 (320 aa).

Positions 1 to 17 (MLRVFVIFSLFIAAINA) are cleaved as a signal peptide. Residues 18–277 (SGEFTVLNRP…YGSDYPVIFN (260 aa)) are Lumenal-facing. The helical transmembrane segment at 278-298 (IILWFMVVFGLSLLAICYAIA) threads the bilayer. The Cytoplasmic segment spans residues 299–320 (AMDPGRDSIIYRMTSTRIKKDN). The short motif at 317 to 320 (KKDN) is the Mediates retrograde transport to the ER element.

Interacts with fz and fz2. Interacts (via N-terminus) with stan. As an accessory component of the multisubunit proton-transporting vacuolar (V)-ATPase protein pump, might interacts with VhaAC45. In terms of processing, proteolytically cleaved by a furin-like convertase in the trans-Golgi network to generate N- and C-terminal fragments. Cleavage is reduced in the fat body.

The protein localises to the cell membrane. It localises to the endoplasmic reticulum membrane. It is found in the vesicle. The protein resides in the apical cell membrane. Its subcellular location is the golgi apparatus membrane. The protein localises to the secreted. Its function is as follows. Multifunctional protein which functions as a transmembrane receptor in the planar cell polarity (PCP) and is involved in the assembly of the proton-transporting vacuolar (V)-ATPase protein pump. As transmembrane receptor mediates fz/PCP signaling through interaction with fz and stabilizes asymmetric PCP domains through its interaction with stan. Also mediates Wnt/beta-cat signaling through interaction with fz/fz2. Probably by controlling the assembly of the V-ATPase pump and thus the acidification of the endo-lysosomal system, plays a role in many neuronal processes including synapse morphology and synaptic transmission. In terms of biological role, stabilizes asymmetric Planar Cell Polarity (PCP) domains through its interaction with stan. This is ATPase H(+)-transporting accessory protein 2 from Drosophila melanogaster (Fruit fly).